The chain runs to 742 residues: Non-structural protein 1 (742 aa).

Disordered regions lie at residues 14–46 (SAMS…SSTA) and 230–268 (LMSL…RPSH). Low complexity-rich tracts occupy residues 20-46 (PSLT…SSTA) and 238-258 (PPRS…PRLP). The stretch at 635–700 (DLTAQLAIAE…HSAATAEAAA (66 aa)) forms a coiled coil.

This sequence belongs to the aquareoviridae NS1 protein family.

Non-structural protein with ssRNA-binding activity. Is probably involved in the formation of viral inclusions, where the assembly of cores and the replication of viral RNA are thought to occur. The chain is Non-structural protein 1 (S4) from Aquareovirus C (isolate Golden shiner/USA/GSRV/1977) (AQRV-C).